The following is a 104-amino-acid chain: uncharacterized protein (104 aa).

The disordered stretch occupies residues 55-104 (RPFSSDRINRPFSPDKKGEPIFPDKRDRPFSPDRINRPFSPDKKGEPIFP).

The protein resides in the plastid. This is an uncharacterized protein from Euglena longa (Euglenophycean alga).